The following is a 458-amino-acid chain: Argininosuccinate lyase (458 aa).

Belongs to the lyase 1 family. Argininosuccinate lyase subfamily.

It is found in the cytoplasm. It carries out the reaction 2-(N(omega)-L-arginino)succinate = fumarate + L-arginine. Its pathway is amino-acid biosynthesis; L-arginine biosynthesis; L-arginine from L-ornithine and carbamoyl phosphate: step 3/3. In Citrifermentans bemidjiense (strain ATCC BAA-1014 / DSM 16622 / JCM 12645 / Bem) (Geobacter bemidjiensis), this protein is Argininosuccinate lyase.